A 55-amino-acid chain; its full sequence is Large ribosomal subunit protein bL33 (55 aa).

The span at 1-10 shows a compositional bias: basic and acidic residues; it reads MAKGGREKIK. Residues 1 to 27 form a disordered region; sequence MAKGGREKIKLQSTAGTGHFYTTDKNK.

This sequence belongs to the bacterial ribosomal protein bL33 family.

This is Large ribosomal subunit protein bL33 from Polaromonas naphthalenivorans (strain CJ2).